The sequence spans 65 residues: UPF0291 protein BBR47_33060 (65 aa).

Belongs to the UPF0291 family.

Its subcellular location is the cytoplasm. In Brevibacillus brevis (strain 47 / JCM 6285 / NBRC 100599), this protein is UPF0291 protein BBR47_33060.